A 718-amino-acid polypeptide reads, in one-letter code: LON peptidase N-terminal domain and RING finger protein 3 (718 aa).

Positions 1-69 (MESLRTEQML…PGTSTPESKV (69 aa)) are disordered. A compositionally biased stretch (polar residues) spans 57-66 (EQSPGTSTPE). Residues 67 to 100 (SKVLLTQADALASRGRIREALEVYRQLSERQQLV) form a TPR 1 repeat. The RING-type 1 zinc-finger motif lies at 158-196 (CRKCHGFLSDPVSLSCGHTFCKLCLERGRAADRRCALCG). 2 TPR repeats span residues 243–276 (ASQLRHEGNRLYRERQVEAALLKYNEAVKLAPND) and 278–310 (LLYSNRSQIYFTLESHENALHDAEIACKLRPMG). The tract at residues 322 to 413 (SQEEAAARGD…TDQGDKPALS (92 aa)) is disordered. Positions 339 to 352 (AKVKGDGQQHHMKD) are enriched in basic and acidic residues. The RING-type 2 zinc finger occupies 426 to 464 (CALCMRLFYEPVTTPCGHTFCLKCLERCLDHNAKCPLCK). A Lon N-terminal domain is found at 505-714 (MEELSNLNKN…GIRRVLAFIS (210 aa)).

This is LON peptidase N-terminal domain and RING finger protein 3 (LONRF3) from Macaca fascicularis (Crab-eating macaque).